We begin with the raw amino-acid sequence, 307 residues long: UDP-3-O-acyl-N-acetylglucosamine deacetylase (307 aa).

Zn(2+)-binding residues include H78, H241, and D245. The active-site Proton donor is H268.

This sequence belongs to the LpxC family. Requires Zn(2+) as cofactor.

The enzyme catalyses a UDP-3-O-[(3R)-3-hydroxyacyl]-N-acetyl-alpha-D-glucosamine + H2O = a UDP-3-O-[(3R)-3-hydroxyacyl]-alpha-D-glucosamine + acetate. It participates in glycolipid biosynthesis; lipid IV(A) biosynthesis; lipid IV(A) from (3R)-3-hydroxytetradecanoyl-[acyl-carrier-protein] and UDP-N-acetyl-alpha-D-glucosamine: step 2/6. Its function is as follows. Catalyzes the hydrolysis of UDP-3-O-myristoyl-N-acetylglucosamine to form UDP-3-O-myristoylglucosamine and acetate, the committed step in lipid A biosynthesis. This Paracidovorax citrulli (strain AAC00-1) (Acidovorax citrulli) protein is UDP-3-O-acyl-N-acetylglucosamine deacetylase.